The primary structure comprises 139 residues: Large ribosomal subunit protein uL16 (139 aa).

It belongs to the universal ribosomal protein uL16 family. Part of the 50S ribosomal subunit.

Its function is as follows. Binds 23S rRNA and is also seen to make contacts with the A and possibly P site tRNAs. The polypeptide is Large ribosomal subunit protein uL16 (Gloeothece citriformis (strain PCC 7424) (Cyanothece sp. (strain PCC 7424))).